A 1448-amino-acid polypeptide reads, in one-letter code: Gag-Pol polyprotein (1448 aa).

The N-myristoyl glycine; by host moiety is linked to residue Gly2. A Nuclear export signal motif is present at residues 16–22; it reads LEKIRLR. A Nuclear localization signal motif is present at residues 26-32; the sequence is KKKYMLK. The segment covering 218-227 has biased composition (low complexity); the sequence is HPQQAPQQGQ. Residues 218–237 form a disordered region; it reads HPQQAPQQGQLREPSGSDIA. 2 consecutive CCHC-type zinc fingers follow at residues 391-408 and 412-429; these read IKCWNCGKEGHSARQCRA and QGCWKCGKMDHVMAKCPN. Residues 440-461 are disordered; it reads LGKEAPQFPHGSSASGADANCS. One can recognise a Peptidase A2 domain in the interval 517–586; sequence VEVLLDTGAD…TPINIFGRNL (70 aa). The active-site For protease activity; shared with dimeric partner is the Asp522. The 191-residue stretch at 640–830 folds into the Reverse transcriptase domain; it reads DGQLEEAPPT…PPFQWMGYEL (191 aa). Residues Asp706, Asp781, and Asp782 each contribute to the Mg(2+) site. The RT 'primer grip' stretch occupies residues 823 to 831; it reads FQWMGYELW. The Tryptophan repeat motif signature appears at 993 to 1009; that stretch reads WEQWWTDYWQVTWIPEW. The region spanning 1029-1152 is the RNase H type-1 domain; it reads IEGEETYYVD…IDHLVSQGIR (124 aa). Residues Asp1038, Glu1073, Asp1093, and Asp1144 each coordinate Mg(2+). The segment at 1158 to 1199 adopts an Integrase-type zinc-finger fold; the sequence is EKIEPAQEEHSKYHSNIKELVFKFGLPRLVAKQIVDTCDKCH. 4 residues coordinate Zn(2+): His1167, His1171, Cys1195, and Cys1198. Positions 1209-1359 constitute an Integrase catalytic domain; sequence VNSDLGTWQM…TPAERLINMI (151 aa). Asp1219 and Asp1271 together coordinate Mg(2+). A DNA-binding region (integrase-type) is located at residues 1378 to 1425; it reads FRVYYREGRDQLWKGPGELLWKGEGAVILKVGTDIKVVPRRKAKIIKD. The interval 1426-1448 is disordered; that stretch reads YGGGKEMDSSSHMEDTGEAREVA.

As to quaternary structure, homotrimer. Interacts with gp41 (via C-terminus). In terms of assembly, homodimer. The active site consists of two apposed aspartic acid residues. Heterodimer of p66 RT and p51 RT (RT p66/p51). Heterodimerization of RT is essential for DNA polymerase activity. Despite the sequence identities, p66 RT and p51 RT have distinct folding. As to quaternary structure, homotetramer; may further associate as a homohexadecamer. Mg(2+) is required as a cofactor. Specific enzymatic cleavages by the viral protease yield mature proteins. The protease is released by autocatalytic cleavage. The polyprotein is cleaved during and after budding, this process is termed maturation. Proteolytic cleavage of p66 RT removes the RNase H domain to yield the p51 RT subunit. Post-translationally, capsid protein p24 is phosphorylated.

It localises to the virion. The protein resides in the host nucleus. Its subcellular location is the host cytoplasm. It is found in the host cell membrane. The enzyme catalyses Specific for a P1 residue that is hydrophobic, and P1' variable, but often Pro.. The catalysed reaction is Endohydrolysis of RNA in RNA/DNA hybrids. Three different cleavage modes: 1. sequence-specific internal cleavage of RNA. Human immunodeficiency virus type 1 and Moloney murine leukemia virus enzymes prefer to cleave the RNA strand one nucleotide away from the RNA-DNA junction. 2. RNA 5'-end directed cleavage 13-19 nucleotides from the RNA end. 3. DNA 3'-end directed cleavage 15-20 nucleotides away from the primer terminus.. It carries out the reaction 3'-end directed exonucleolytic cleavage of viral RNA-DNA hybrid.. It catalyses the reaction DNA(n) + a 2'-deoxyribonucleoside 5'-triphosphate = DNA(n+1) + diphosphate. Its activity is regulated as follows. The viral protease is inhibited by many synthetic protease inhibitors (PIs), such as amprenavir, atazanavir, indinavir, loprinavir, nelfinavir, ritonavir and saquinavir. RT can be inhibited either by nucleoside RT inhibitors (NRTIs) or by non nucleoside RT inhibitors (NNRTIs). NRTIs act as chain terminators, whereas NNRTIs inhibit DNA polymerization by binding a small hydrophobic pocket near the RT active site and inducing an allosteric change in this region. Classical NRTIs are abacavir, adefovir (PMEA), didanosine (ddI), lamivudine (3TC), stavudine (d4T), tenofovir (PMPA), zalcitabine (ddC), and zidovudine (AZT). Classical NNRTIs are atevirdine (BHAP U-87201E), delavirdine, efavirenz (DMP-266), emivirine (I-EBU), and nevirapine (BI-RG-587). The tritherapies used as a basic effective treatment of AIDS associate two NRTIs and one NNRTI. Use of protease inhibitors in tritherapy regimens permit more ambitious therapeutic strategies. In terms of biological role, gag-Pol polyprotein and Gag polyprotein may regulate their own translation, by the binding genomic RNA in the 5'-UTR. At low concentration, Gag-Pol and Gag would promote translation, whereas at high concentration, the polyproteins encapsidate genomic RNA and then shut off translation. Its function is as follows. Matrix protein p17 has two main functions: in infected cell, it targets Gag and Gag-pol polyproteins to the plasma membrane via a multipartite membrane-binding signal, that includes its myristointegration complex. The myristoylation signal and the NLS exert conflicting influences its subcellular localization. The key regulation of these motifs might be phosphorylation of a portion of MA molecules on the C-terminal tyrosine at the time of virus maturation, by virion-associated cellular tyrosine kinase. Implicated in the release from host cell mediated by Vpu. Functionally, capsid protein p24 forms the conical core that encapsulates the genomic RNA-nucleocapsid complex in the virion. The core is constituted by capsid protein hexamer subunits. The core is disassembled soon after virion entry. Interaction with host PPIA/CYPA protects the virus from restriction by host TRIM5-alpha and from an unknown antiviral activity in host cells. This capsid restriction by TRIM5 is one of the factors which restricts SIV to the simian species. Nucleocapsid protein p7 encapsulates and protects viral dimeric unspliced (genomic) RNA. Binds these RNAs through its zinc fingers. Facilitates rearangement of nucleic acid secondary structure during retrotranscription of genomic RNA. This capability is referred to as nucleic acid chaperone activity. In terms of biological role, the aspartyl protease mediates proteolytic cleavages of Gag and Gag-Pol polyproteins during or shortly after the release of the virion from the plasma membrane. Cleavages take place as an ordered, step-wise cascade to yield mature proteins. This process is called maturation. Displays maximal activity during the budding process just prior to particle release from the cell. Also cleaves Nef and Vif, probably concomitantly with viral structural proteins on maturation of virus particles. Hydrolyzes host EIF4GI and PABP1 in order to shut off the capped cellular mRNA translation. The resulting inhibition of cellular protein synthesis serves to ensure maximal viral gene expression and to evade host immune response. Its function is as follows. Reverse transcriptase/ribonuclease H (RT) is a multifunctional enzyme that converts the viral dimeric RNA genome into dsDNA in the cytoplasm, shortly after virus entry into the cell. This enzyme displays a DNA polymerase activity that can copy either DNA or RNA templates, and a ribonuclease H (RNase H) activity that cleaves the RNA strand of RNA-DNA heteroduplexes in a partially processive 3' to 5' endonucleasic mode. Conversion of viral genomic RNA into dsDNA requires many steps. A tRNA binds to the primer-binding site (PBS) situated at the 5'-end of the viral RNA. RT uses the 3' end of the tRNA primer to perform a short round of RNA-dependent minus-strand DNA synthesis. The reading proceeds through the U5 region and ends after the repeated (R) region which is present at both ends of viral RNA. The portion of the RNA-DNA heteroduplex is digested by the RNase H, resulting in a ssDNA product attached to the tRNA primer. This ssDNA/tRNA hybridizes with the identical R region situated at the 3' end of viral RNA. This template exchange, known as minus-strand DNA strong stop transfer, can be either intra- or intermolecular. RT uses the 3' end of this newly synthesized short ssDNA to perform the RNA-dependent minus-strand DNA synthesis of the whole template. RNase H digests the RNA template except for two polypurine tracts (PPTs) situated at the 5'-end and near the center of the genome. It is not clear if both polymerase and RNase H activities are simultaneous. RNase H can probably proceed both in a polymerase-dependent (RNA cut into small fragments by the same RT performing DNA synthesis) and a polymerase-independent mode (cleavage of remaining RNA fragments by free RTs). Secondly, RT performs DNA-directed plus-strand DNA synthesis using the PPTs that have not been removed by RNase H as primers. PPTs and tRNA primers are then removed by RNase H. The 3' and 5' ssDNA PBS regions hybridize to form a circular dsDNA intermediate. Strand displacement synthesis by RT to the PBS and PPT ends produces a blunt ended, linear dsDNA copy of the viral genome that includes long terminal repeats (LTRs) at both ends. Functionally, integrase catalyzes viral DNA integration into the host chromosome, by performing a series of DNA cutting and joining reactions. This enzyme activity takes place after virion entry into a cell and reverse transcription of the RNA genome in dsDNA. The first step in the integration process is 3' processing. This step requires a complex comprising the viral genome, matrix protein, Vpr and integrase. This complex is called the pre-integration complex (PIC). The integrase protein removes 2 nucleotides from each 3' end of the viral DNA, leaving recessed CA OH's at the 3' ends. In the second step, the PIC enters cell nucleus. This process is mediated through integrase and Vpr proteins, and allows the virus to infect a non dividing cell. This ability to enter the nucleus is specific of lentiviruses, other retroviruses cannot and rely on cell division to access cell chromosomes. In the third step, termed strand transfer, the integrase protein joins the previously processed 3' ends to the 5' ends of strands of target cellular DNA at the site of integration. The 5'-ends are produced by integrase-catalyzed staggered cuts, 5 bp apart. A Y-shaped, gapped, recombination intermediate results, with the 5'-ends of the viral DNA strands and the 3' ends of target DNA strands remaining unjoined, flanking a gap of 5 bp. The last step is viral DNA integration into host chromosome. This involves host DNA repair synthesis in which the 5 bp gaps between the unjoined strands are filled in and then ligated. Since this process occurs at both cuts flanking the SIV genome, a 5 bp duplication of host DNA is produced at the ends of SIV integration. Alternatively, Integrase may catalyze the excision of viral DNA just after strand transfer, this is termed disintegration. This Cercopithecidae (Old World monkeys) protein is Gag-Pol polyprotein (gag-pol).